The chain runs to 501 residues: Ectoine/hydroxyectoine transporter (501 aa).

12 consecutive transmembrane segments (helical) span residues 9–29 (PVFYVSAFVVFLLVIIGATLP), 45–65 (IHFGWFYLLAVFVFVVFLITL), 86–106 (FFTWIGMLFSAGFGAGLVFWG), 137–157 (AFFHWGVSQWSVFAIVGLVIA), 190–210 (LAVIATVMGVATSLGLGILQM), 220–240 (VPTSIWVQMAIAGVMLITYLI), 258–278 (LGSLFIIIVFVFMAGPTVFIL), 311–331 (WTIFYWAWSTAWSPFVGAFIA), 343–363 (VLGVLVVSPAIACIWIAAFGG), 395–415 (LPMTTILSILSIFLIFTFLVT), 441–461 (IVWGLLITAIAVVLLLAGGLE), and 465–485 (TASLISALPFTVILLLMMASF).

Belongs to the BCCT transporter (TC 2.A.15) family.

It localises to the cell inner membrane. Its function is as follows. Mediates the import of ectoine and hydroxyectoine, which function as osmotic and cold stress protectants. Also has minor uptake activities for the compatible solutes proline and glycine betaine. This Virgibacillus pantothenticus protein is Ectoine/hydroxyectoine transporter.